A 436-amino-acid chain; its full sequence is UDP-N-acetylmuramoylalanine--D-glutamate ligase (436 aa).

An ATP-binding site is contributed by 112–118 (GSNGKST).

This sequence belongs to the MurCDEF family.

Its subcellular location is the cytoplasm. It carries out the reaction UDP-N-acetyl-alpha-D-muramoyl-L-alanine + D-glutamate + ATP = UDP-N-acetyl-alpha-D-muramoyl-L-alanyl-D-glutamate + ADP + phosphate + H(+). The protein operates within cell wall biogenesis; peptidoglycan biosynthesis. In terms of biological role, cell wall formation. Catalyzes the addition of glutamate to the nucleotide precursor UDP-N-acetylmuramoyl-L-alanine (UMA). The chain is UDP-N-acetylmuramoylalanine--D-glutamate ligase from Photorhabdus laumondii subsp. laumondii (strain DSM 15139 / CIP 105565 / TT01) (Photorhabdus luminescens subsp. laumondii).